The sequence spans 276 residues: Undecaprenyl-diphosphatase (276 aa).

A run of 6 helical transmembrane segments spans residues 43 to 63 (RAMA…VWEF), 85 to 105 (ANLL…ADLI), 109 to 129 (LFNP…MLWA), 183 to 203 (AATE…AVYS), 214 to 234 (SDLP…MIAV), and 249 to 269 (FAWY…FGWV).

It belongs to the UppP family.

Its subcellular location is the cell inner membrane. It catalyses the reaction di-trans,octa-cis-undecaprenyl diphosphate + H2O = di-trans,octa-cis-undecaprenyl phosphate + phosphate + H(+). Catalyzes the dephosphorylation of undecaprenyl diphosphate (UPP). Confers resistance to bacitracin. This chain is Undecaprenyl-diphosphatase, found in Pseudomonas putida (strain W619).